The chain runs to 512 residues: 2,3-bisphosphoglycerate-independent phosphoglycerate mutase (512 aa).

Residues Asp-11 and Ser-61 each coordinate Mn(2+). Ser-61 acts as the Phosphoserine intermediate in catalysis. Residues His-122, 152-153 (RD), Arg-184, Arg-190, 259-262 (RADR), and Lys-332 each bind substrate. Asp-399, His-403, Asp-440, His-441, and His-459 together coordinate Mn(2+).

Belongs to the BPG-independent phosphoglycerate mutase family. As to quaternary structure, monomer. Mn(2+) is required as a cofactor.

The enzyme catalyses (2R)-2-phosphoglycerate = (2R)-3-phosphoglycerate. The protein operates within carbohydrate degradation; glycolysis; pyruvate from D-glyceraldehyde 3-phosphate: step 3/5. Functionally, catalyzes the interconversion of 2-phosphoglycerate and 3-phosphoglycerate. This Francisella tularensis subsp. novicida (strain U112) protein is 2,3-bisphosphoglycerate-independent phosphoglycerate mutase.